The sequence spans 186 residues: MDKEHLKKNLQEKMEKALKVLDHELKGLRTGRASVNLLDSVTVEAYGSKMPLSQVASLSTPDARTINVQVWDKSMVSSVEKGITIANLGLTPATDGQLIRLPIPALTEERRTELVKLAHKYGEDTKISLRNIRRDGNEALKKLAKDNVIAKDEHHSLSEQVQKLTDDYSNKVDSVIKQKEQEIMTV.

Belongs to the RRF family.

The protein resides in the cytoplasm. Functionally, responsible for the release of ribosomes from messenger RNA at the termination of protein biosynthesis. May increase the efficiency of translation by recycling ribosomes from one round of translation to another. The sequence is that of Ribosome-recycling factor from Rickettsia africae (strain ESF-5).